We begin with the raw amino-acid sequence, 254 residues long: VVTITLNLANPSKGQYSSFVDRIRNNVRDPKLKYGGTDIAVIGAPPTREKYLRINLQGPRGTVSLGLRRENLYVVAYLAMDNTNTNKAYYFRNQITSAELRTVFPEATATNQIVIQYGEDYQSIERNAQITQGSQSRKELGLGIDLLVTSIDGVNRKARVVRNEARFLLIAIQMTAEAARFRYIQNLVTFNFPKKFDSDNKVIQFEVSWGKISRAIYGDCKNGVFNKDYDFGFGKVRQAKQLQMGLLMYLGRPG.

It belongs to the ribosome-inactivating protein family. Type 1 RIP subfamily. Expressed in seeds; most abundant in the perisperm.

It carries out the reaction Endohydrolysis of the N-glycosidic bond at one specific adenosine on the 28S rRNA.. Exhibits N-glycosylase activity. Catalyzes the release of one adenine from a ribosome. Acts as a ribosome-inactivating protein and inhibits protein synthesis. Induces cell death in Huh-7 liver cells. May contribute to the protection against plant pests and predators or play a role in regulating the death of plant cells. The chain is rRNA N-glycosylase sapovaccarin-S2 from Gypsophila vaccaria (Cow soapwort).